Consider the following 357-residue polypeptide: SNF1-related protein kinase regulatory subunit gamma-like PV42b (357 aa).

4 consecutive CBS domains span residues methionine 16 to serine 97, histidine 113 to leucine 185, alanine 198 to leucine 273, and serine 293 to serine 351.

This sequence belongs to the 5'-AMP-activated protein kinase gamma subunit family. As to expression, expressed highly in rosette leaves, cauline leaves, open flowers, developing siliques and dry seeds, but at a low level in stems and floral buds.

In terms of biological role, plays redundant role with PV42a in regulating male gametogenesis and pollen tube guidance. The protein is SNF1-related protein kinase regulatory subunit gamma-like PV42b (PV42B) of Arabidopsis thaliana (Mouse-ear cress).